The chain runs to 584 residues: Arginine--tRNA ligase (584 aa).

The 'HIGH' region signature appears at 126-136 (PNIAKEMHVGH).

It belongs to the class-I aminoacyl-tRNA synthetase family. In terms of assembly, monomer.

The protein localises to the cytoplasm. It carries out the reaction tRNA(Arg) + L-arginine + ATP = L-arginyl-tRNA(Arg) + AMP + diphosphate. The chain is Arginine--tRNA ligase from Synechococcus elongatus (strain ATCC 33912 / PCC 7942 / FACHB-805) (Anacystis nidulans R2).